We begin with the raw amino-acid sequence, 451 residues long: Putative gluconeogenesis factor (451 aa).

It belongs to the gluconeogenesis factor family.

It localises to the cytoplasm. In terms of biological role, required for morphogenesis under gluconeogenic growth conditions. The polypeptide is Putative gluconeogenesis factor (Clostridium acetobutylicum (strain ATCC 824 / DSM 792 / JCM 1419 / IAM 19013 / LMG 5710 / NBRC 13948 / NRRL B-527 / VKM B-1787 / 2291 / W)).